Reading from the N-terminus, the 250-residue chain is Ribosomal RNA-processing protein 15 (250 aa).

The segment covering 1–27 (MGSKHRVDTKDKKRTRKNAEFGREKRN) has biased composition (basic and acidic residues). Positions 1–101 (MGSKHRVDTK…NSKHDDGSTG (101 aa)) are disordered. 2 stretches are compositionally biased toward acidic residues: residues 43-53 (MEGDEAEEDEQ) and 67-83 (EQSD…EDDD). Position 69 is a phosphoserine (Ser-69).

The protein belongs to the RRP15 family.

The protein resides in the nucleus. It localises to the nucleolus. Constituent of pre-60S ribosomal particles. Required for large subunit rRNA maturation, in particular processing of the 27S pre-rRNA at the A3 and B1 sites to yield 5.8S and 25S rRNA. The sequence is that of Ribosomal RNA-processing protein 15 from Saccharomyces cerevisiae (strain ATCC 204508 / S288c) (Baker's yeast).